Here is a 319-residue protein sequence, read N- to C-terminus: G-protein coupled receptor 171 (319 aa).

Over 1–21 the chain is Extracellular; sequence MTNSSTFCPVYRDLEPFTYFF. N-linked (GlcNAc...) asparagine glycosylation is present at N3. Residues 22-42 traverse the membrane as a helical segment; that stretch reads YLVFLIGIIGSCFATWAFIQK. Topologically, residues 43 to 48 are cytoplasmic; sequence TTNHRC. Residues 49 to 69 traverse the membrane as a helical segment; the sequence is VSIYLINLLTADFLLTLALPV. Residues 70-89 lie on the Extracellular side of the membrane; that stretch reads KIIVDLGVAPWKLRIFHCQV. A helical membrane pass occupies residues 90–110; sequence TACLIYINMYLSIIFLAFVSI. Residues 111-132 lie on the Cytoplasmic side of the membrane; the sequence is DRCLQLIHSCKIYRIQEPGFAK. The chain crosses the membrane as a helical span at residues 133–153; sequence MISAVVWLMVLLIMVPNMVIP. Over 154–181 the chain is Extracellular; that stretch reads IKDIKEKSNVGCMEFKKEFGRNWHLLTN. Residues 182-202 form a helical membrane-spanning segment; the sequence is FICVAIFLNFSVIILISNFLA. Residues 203 to 224 lie on the Cytoplasmic side of the membrane; sequence IRQLYRNRDNTNYPSVKSALLH. The chain crosses the membrane as a helical span at residues 225–245; it reads ILLVTASYIICFVPYHAVRIP. Topologically, residues 246 to 268 are extracellular; it reads YTLSQTEVISDCSTRIALFKAKE. The chain crosses the membrane as a helical span at residues 269–289; the sequence is ATLLLAVSNLCFDPILYYHLS. Topologically, residues 290 to 319 are cytoplasmic; the sequence is KAFRLKVTETFASPKKSKPLEERLRSENDV.

It belongs to the G-protein coupled receptor 1 family. In terms of tissue distribution, highly expressed in hypothalamus, including the arcuate nucleus, paraventricular nucleus and dorsomedial hypothalamus. Expressed in periaqueductal gray (at protein level), found primarily in GABAergic neurons and to a lesser extent in glutamatergic neurons. Expressed in T cells and natural killer cells.

It is found in the cell membrane. G-protein coupled receptor for Big LEN, a 16-amino acid neuropeptide produced from the precursor protein, proSAAS (encoded by PCSK1N). Acts through a G(i)-alpha-mediated pathway in response to Big LEN. Big LEN-GPR171 system plays an important role in regulating feeding and metabolism. Also plays a role in modulating fear and anxiety-like behaviors in the basolateral amygdala. Big LEN-GPR171 modulates the mu-type opioid receptor signaling and antinociception. Acts as a negative regulator T cell function. In Mus musculus (Mouse), this protein is G-protein coupled receptor 171 (Gpr171).